The following is a 324-amino-acid chain: Phospho-N-acetylmuramoyl-pentapeptide-transferase (324 aa).

10 helical membrane passes run 9–29, 53–73, 77–97, 117–137, 147–167, 176–196, 201–221, 227–247, 253–273, and 304–324; these read TFAV…PFLV, TMGA…FSFI, VSAA…LGFL, FLGQ…NGFA, IEVD…VGFS, LDGL…VIAF, MDVA…LLFN, IFMG…ISIL, LLLL…LQVF, and VLTF…VVIF.

The protein belongs to the glycosyltransferase 4 family. MraY subfamily. It depends on Mg(2+) as a cofactor.

It localises to the cell membrane. It catalyses the reaction UDP-N-acetyl-alpha-D-muramoyl-L-alanyl-gamma-D-glutamyl-meso-2,6-diaminopimeloyl-D-alanyl-D-alanine + di-trans,octa-cis-undecaprenyl phosphate = di-trans,octa-cis-undecaprenyl diphospho-N-acetyl-alpha-D-muramoyl-L-alanyl-D-glutamyl-meso-2,6-diaminopimeloyl-D-alanyl-D-alanine + UMP. It participates in cell wall biogenesis; peptidoglycan biosynthesis. Its function is as follows. Catalyzes the initial step of the lipid cycle reactions in the biosynthesis of the cell wall peptidoglycan: transfers peptidoglycan precursor phospho-MurNAc-pentapeptide from UDP-MurNAc-pentapeptide onto the lipid carrier undecaprenyl phosphate, yielding undecaprenyl-pyrophosphoryl-MurNAc-pentapeptide, known as lipid I. This is Phospho-N-acetylmuramoyl-pentapeptide-transferase from Listeria monocytogenes serotype 4b (strain CLIP80459).